A 303-amino-acid polypeptide reads, in one-letter code: UDP-3-O-acyl-N-acetylglucosamine deacetylase (303 aa).

His78, His237, and Asp241 together coordinate Zn(2+). His264 acts as the Proton donor in catalysis.

This sequence belongs to the LpxC family. Requires Zn(2+) as cofactor.

The enzyme catalyses a UDP-3-O-[(3R)-3-hydroxyacyl]-N-acetyl-alpha-D-glucosamine + H2O = a UDP-3-O-[(3R)-3-hydroxyacyl]-alpha-D-glucosamine + acetate. It functions in the pathway glycolipid biosynthesis; lipid IV(A) biosynthesis; lipid IV(A) from (3R)-3-hydroxytetradecanoyl-[acyl-carrier-protein] and UDP-N-acetyl-alpha-D-glucosamine: step 2/6. Catalyzes the hydrolysis of UDP-3-O-myristoyl-N-acetylglucosamine to form UDP-3-O-myristoylglucosamine and acetate, the committed step in lipid A biosynthesis. This Pseudomonas syringae pv. tomato (strain ATCC BAA-871 / DC3000) protein is UDP-3-O-acyl-N-acetylglucosamine deacetylase.